Here is a 502-residue protein sequence, read N- to C-terminus: Arabinose import ATP-binding protein AraG (502 aa).

ABC transporter domains are found at residues 6 to 241 (LEFD…MVGR) and 252 to 497 (REVG…MVES). Residue 38-45 (GENGAGKS) participates in ATP binding.

Belongs to the ABC transporter superfamily. Arabinose importer (TC 3.A.1.2.2) family. In terms of assembly, the complex is composed of two ATP-binding proteins (AraG), two transmembrane proteins (AraH) and a solute-binding protein (AraF).

The protein resides in the cell inner membrane. The enzyme catalyses L-arabinose(out) + ATP + H2O = L-arabinose(in) + ADP + phosphate + H(+). Its function is as follows. Part of the ABC transporter complex AraFGH involved in arabinose import. Responsible for energy coupling to the transport system. The sequence is that of Arabinose import ATP-binding protein AraG from Mannheimia succiniciproducens (strain KCTC 0769BP / MBEL55E).